A 430-amino-acid polypeptide reads, in one-letter code: Histidinol dehydrogenase (430 aa).

The substrate site is built by S237, Q259, and H262. Positions 259 and 262 each coordinate Zn(2+). Active-site proton acceptor residues include E327 and H328. The substrate site is built by H328, D361, E415, and H420. Position 361 (D361) interacts with Zn(2+). H420 contributes to the Zn(2+) binding site.

The protein belongs to the histidinol dehydrogenase family. The cofactor is Zn(2+).

It catalyses the reaction L-histidinol + 2 NAD(+) + H2O = L-histidine + 2 NADH + 3 H(+). It functions in the pathway amino-acid biosynthesis; L-histidine biosynthesis; L-histidine from 5-phospho-alpha-D-ribose 1-diphosphate: step 9/9. In terms of biological role, catalyzes the sequential NAD-dependent oxidations of L-histidinol to L-histidinaldehyde and then to L-histidine. This is Histidinol dehydrogenase from Sulfurimonas denitrificans (strain ATCC 33889 / DSM 1251) (Thiomicrospira denitrificans (strain ATCC 33889 / DSM 1251)).